The sequence spans 377 residues: 23S rRNA (uracil(747)-C(5))-methyltransferase RlmC (377 aa).

[4Fe-4S] cluster is bound by residues C3, C11, C14, and C87. S-adenosyl-L-methionine is bound by residues Q212, F241, E262, and N307. Catalysis depends on C334, which acts as the Nucleophile.

It belongs to the class I-like SAM-binding methyltransferase superfamily. RNA M5U methyltransferase family. RlmC subfamily.

It catalyses the reaction uridine(747) in 23S rRNA + S-adenosyl-L-methionine = 5-methyluridine(747) in 23S rRNA + S-adenosyl-L-homocysteine + H(+). Its function is as follows. Catalyzes the formation of 5-methyl-uridine at position 747 (m5U747) in 23S rRNA. This Photorhabdus laumondii subsp. laumondii (strain DSM 15139 / CIP 105565 / TT01) (Photorhabdus luminescens subsp. laumondii) protein is 23S rRNA (uracil(747)-C(5))-methyltransferase RlmC.